The chain runs to 201 residues: Small ribosomal subunit protein uS4 (201 aa).

Positions 26-48 (LSKKNYPPGQHGNSRKRKTSEYG) are disordered. Residues 92 to 155 (GRLDNVVFRL…KSLEVIANSL (64 aa)) enclose the S4 RNA-binding domain.

It belongs to the universal ribosomal protein uS4 family. As to quaternary structure, part of the 30S ribosomal subunit. Contacts protein S5. The interaction surface between S4 and S5 is involved in control of translational fidelity.

Its function is as follows. One of the primary rRNA binding proteins, it binds directly to 16S rRNA where it nucleates assembly of the body of the 30S subunit. In terms of biological role, with S5 and S12 plays an important role in translational accuracy. In Bacteroides thetaiotaomicron (strain ATCC 29148 / DSM 2079 / JCM 5827 / CCUG 10774 / NCTC 10582 / VPI-5482 / E50), this protein is Small ribosomal subunit protein uS4.